Reading from the N-terminus, the 345-residue chain is Delta(6)-protoilludene synthase (345 aa).

Residues Asp84, Asn220, Ser224, and Glu228 each coordinate Mg(2+). The short motif at 84–88 (DEYSD) is the DDXXD motif element. The (2E,6E)-farnesyl diphosphate site is built by Arg309 and Tyr310.

It belongs to the terpene synthase family. Monomer. Mg(2+) is required as a cofactor.

The enzyme catalyses (2E,6E)-farnesyl diphosphate = Delta(6)-protoilludene + diphosphate. Its pathway is secondary metabolite biosynthesis. Functionally, delta(6)-protoilludene synthase, part of the gene cluster that mediates the biosynthesis of melleolides, a range of antifungal and phytotoxic polyketide derivatives composed of an orsellinic acid (OA) moiety esterified to various sesquiterpene alcohols. The first step in melleolides biosynthesis is performed by the delta(6)-protoilludene synthase PRO1 which catalyzes the cyclization of farnesyl diphosphate to protoilludene. The orsellinic acid synthase armB produces OA by condensing acetyl-CoA with 3 malonyl-CoA units in a three-round chain elongation reaction folowed by a C2-C7 ring closure. ArmB further catalyzes the trans-esterification of OA to the various sesquiterpene alcohols resulting from the hydroxylation of protoilludene. The melleolides cluster also includes 5 cytochrome P450 monooxygenases, 4 NAD(+)-dependent oxidoreductases, one flavin-dependent oxidoreductase, and one O-methyltransferase. The cytochrome P450 monooxygenases may be involved in protoilludene hydroxylation to elaborate melleolides with multiple alcohol groups, such as melleolide D, which carries alcohol functionalities at C-4, C-5, C-10, and C-13. The role of the NAD(+)-dependent enzymes remains unknown. Numerous melleolides, including arnamial, show 5'-O-methylation of the aromatic moiety which may be catalyzed by the methyltransferase encoded in the cluster. The flavin-dependent oxidoreductase might represent the dehydrogenase yielding the aldehyde in position 1 of arnamial and other melleolides. Finally, several halogenases, localized outside of the cluster, are able to catalyze the transfer of a single chlorine atom to the melleolide backbone, resulting in a 6'-chloromelleolide product. The sequence is that of Delta(6)-protoilludene synthase from Armillaria gallica (Bulbous honey fungus).